Here is a 505-residue protein sequence, read N- to C-terminus: MGRVVAELVSSLLGLWLLLCSCGCPEGAELRAPPDKIAIIGAGIGGTSAAYYLRQKFGKDVKIDLFEREEVGGRLATMMVQGQEYEAGGSVIHPLNLHMKRFVKDLGLSAVQASGGLLGIYNGETLVFEESNWFIINVIKLVWRYGFQSLRMHMWVEDVLDKFMRIYRYQSHDYAFSSVEKLLHALGGDDFLGMLNRTLLETLQKAGFSEKFLNEMIAPVMRVNYGQSTDINAFVGAVSLSCSDSGLWAVEGGNKLVCSGLLQASKSNLISGSVMYIEEKTKTKYTGNPTKMYEVVYQIGTETRSDFYDIVLVATPLNRKMSNITFLNFDPPIEEFHQYYQHIVTTLVKGELNTSIFSSRPIDKFGLNTVLTTDNSDLFINSIGIVPSVREKEDPEPSTDGTYVWKIFSQETLTKAQILKLFLSYDYAVKKPWLAYPHYKPPEKCPSIILHDRLYYLNGIECAASAMEMSAIAAHNAALLAYHRWNGHTDMIDQDGLYEKLKTEL.

Positions 1–27 (MGRVVAELVSSLLGLWLLLCSCGCPEG) are cleaved as a signal peptide. Residues Asn196, Asn323, and Asn353 are each glycosylated (N-linked (GlcNAc...) asparagine).

It belongs to the prenylcysteine oxidase family. It depends on FAD as a cofactor. In terms of tissue distribution, widely expressed.

The protein resides in the lysosome. The enzyme catalyses an S-polyprenyl-L-cysteine + O2 + H2O = a polyprenal + L-cysteine + H2O2. It catalyses the reaction S-(2E,6E)-farnesyl-L-cysteine + O2 + H2O = (2E,6E)-farnesal + L-cysteine + H2O2. It carries out the reaction [(2E,6E,10E)-geranylgeranyl]-L-cysteine + O2 + H2O = (2E,6E,10E)-geranylgeranial + L-cysteine + H2O2. Functionally, prenylcysteine oxidase that cleaves the thioether bond of prenyl-L-cysteines, such as farnesylcysteine and geranylgeranylcysteine. Only active against free prenylcysteines and not prenylcysteine residues within prenylated proteins or peptides. Involved in the final step in the degradation of prenylated proteins, by degrading prenylcysteines after the protein has been degraded. The chain is Prenylcysteine oxidase 1 from Homo sapiens (Human).